A 336-amino-acid polypeptide reads, in one-letter code: PTS system glucitol/sorbitol-specific EIIB component (336 aa).

Residues Lys3 to Leu195 form the PTS EIIB type-5 domain. The active-site Phosphocysteine intermediate; for EIIB activity is the Cys75. Cys75 carries the phosphocysteine; by EIIA modification. 5 consecutive transmembrane segments (helical) span residues Ile194 to Gly214, Gly228 to Gly248, Gly250 to Ile270, Ala278 to Ala298, and Val312 to Ile332.

The protein localises to the cell membrane. The catalysed reaction is D-sorbitol(out) + N(pros)-phospho-L-histidyl-[protein] = D-sorbitol 6-phosphate(in) + L-histidyl-[protein]. In terms of biological role, the phosphoenolpyruvate-dependent sugar phosphotransferase system (sugar PTS), a major carbohydrate active transport system, catalyzes the phosphorylation of incoming sugar substrates concomitantly with their translocation across the cell membrane. The enzyme II complex composed of SrlA, SrlB and SrlE is involved in glucitol/sorbitol transport. The chain is PTS system glucitol/sorbitol-specific EIIB component (srlE) from Clostridium beijerinckii (strain ATCC 51743 / NCIMB 8052) (Clostridium acetobutylicum).